A 488-amino-acid polypeptide reads, in one-letter code: Transmembrane protein 39A-B (488 aa).

2 N-linked (GlcNAc...) asparagine glycosylation sites follow: N31 and N39. Helical transmembrane passes span 72-92 (GLVF…TQYI), 110-130 (TSLN…VMLA), and 155-175 (LIIG…WTTV). N180 carries an N-linked (GlcNAc...) asparagine glycan. A helical transmembrane segment spans residues 182–202 (SVLNLLFLGYPFGVYVPLCCF). The N-linked (GlcNAc...) asparagine glycan is linked to N206. A run of 4 helical transmembrane segments spans residues 287 to 307 (EVLF…LCFV), 319 to 339 (CEHL…QLLP), 420 to 440 (LLNL…YSLL), and 446 to 466 (NHTL…FKLL).

It belongs to the TMEM39 family.

The protein localises to the membrane. This is Transmembrane protein 39A-B (tmem39a-b) from Xenopus laevis (African clawed frog).